The chain runs to 155 residues: Large ribosomal subunit protein uL13 (155 aa).

Belongs to the universal ribosomal protein uL13 family. As to quaternary structure, part of the 50S ribosomal subunit.

Functionally, this protein is one of the early assembly proteins of the 50S ribosomal subunit, although it is not seen to bind rRNA by itself. It is important during the early stages of 50S assembly. The chain is Large ribosomal subunit protein uL13 from Aeropyrum pernix (strain ATCC 700893 / DSM 11879 / JCM 9820 / NBRC 100138 / K1).